A 379-amino-acid chain; its full sequence is Putative 8-amino-7-oxononanoate synthase (379 aa).

Substrate is bound at residue Arg-21. 97–98 (GY) is a pyridoxal 5'-phosphate binding site. Substrate is bound at residue His-122. Pyridoxal 5'-phosphate is bound by residues Ser-169, 194-197 (DDAH), and 223-226 (TLSK). Position 226 is an N6-(pyridoxal phosphate)lysine (Lys-226). Thr-340 contributes to the substrate binding site.

This sequence belongs to the class-II pyridoxal-phosphate-dependent aminotransferase family. BioF subfamily. Homodimer. Pyridoxal 5'-phosphate serves as cofactor.

The catalysed reaction is 6-carboxyhexanoyl-[ACP] + L-alanine + H(+) = (8S)-8-amino-7-oxononanoate + holo-[ACP] + CO2. It functions in the pathway cofactor biosynthesis; biotin biosynthesis. Its function is as follows. Catalyzes the decarboxylative condensation of pimeloyl-[acyl-carrier protein] and L-alanine to produce 8-amino-7-oxononanoate (AON), [acyl-carrier protein], and carbon dioxide. This is Putative 8-amino-7-oxononanoate synthase (bioF) from Bacillus licheniformis (strain ATCC 14580 / DSM 13 / JCM 2505 / CCUG 7422 / NBRC 12200 / NCIMB 9375 / NCTC 10341 / NRRL NRS-1264 / Gibson 46).